A 466-amino-acid polypeptide reads, in one-letter code: Glucose-6-phosphate 1-dehydrogenase 1 (466 aa).

NADP(+) is bound by residues S48, 88 to 89 (DV), and K141. Substrate-binding residues include H171, K175, E209, and D228. H233 functions as the Proton acceptor in the catalytic mechanism. 2 residues coordinate substrate: K319 and K324.

Belongs to the glucose-6-phosphate dehydrogenase family.

The enzyme catalyses D-glucose 6-phosphate + NADP(+) = 6-phospho-D-glucono-1,5-lactone + NADPH + H(+). Its pathway is carbohydrate degradation; pentose phosphate pathway; D-ribulose 5-phosphate from D-glucose 6-phosphate (oxidative stage): step 1/3. In terms of biological role, catalyzes the oxidation of glucose 6-phosphate to 6-phosphogluconolactone. The polypeptide is Glucose-6-phosphate 1-dehydrogenase 1 (Mycobacterium tuberculosis (strain CDC 1551 / Oshkosh)).